Here is a 179-residue protein sequence, read N- to C-terminus: Inner membrane-spanning protein YciB (179 aa).

The next 5 helical transmembrane spans lie at 22 to 42 (IYAATAALIVATAIVLIYSWV), 50 to 70 (MALITFVLVVVFGGLTLFFHN), 76 to 96 (WKVTVIYALFAGALLVSQWVM), 121 to 141 (LAWAVFFILCGLANIYIAFWL), and 149 to 169 (FKVFGLTALTLIFTLLSGIYI).

Belongs to the YciB family.

It is found in the cell inner membrane. Functionally, plays a role in cell envelope biogenesis, maintenance of cell envelope integrity and membrane homeostasis. The polypeptide is Inner membrane-spanning protein YciB (Shigella boydii serotype 18 (strain CDC 3083-94 / BS512)).